Here is a 117-residue protein sequence, read N- to C-terminus: Protein OPG035 (117 aa).

This sequence belongs to the poxviridae OPG035 family.

In terms of biological role, bcl-2-like protein which contributes to virulence by preventing host NF-kappa-B activation in response to pro-inflammatory stimuli such as TNF-alpha or IL1B. The chain is Protein OPG035 (OPG035) from Homo sapiens (Human).